The sequence spans 317 residues: L-lactate dehydrogenase 2 (317 aa).

Residues Val16, Asp37, Lys42, Tyr68, and 82–83 (GA) contribute to the NAD(+) site. Substrate is bound by residues Gln85 and Arg91. Residues Thr104, 121 to 123 (ASN), and Thr146 each bind NAD(+). Position 123 to 126 (123 to 126 (NPVD)) interacts with substrate. Position 151-154 (151-154 (DTTR)) interacts with substrate. Positions 156 and 171 each coordinate beta-D-fructose 1,6-bisphosphate. The Proton acceptor role is filled by His178. Tyr223 is modified (phosphotyrosine). Thr232 contributes to the substrate binding site.

It belongs to the LDH/MDH superfamily. LDH family. Homotetramer.

Its subcellular location is the cytoplasm. The catalysed reaction is (S)-lactate + NAD(+) = pyruvate + NADH + H(+). The protein operates within fermentation; pyruvate fermentation to lactate; (S)-lactate from pyruvate: step 1/1. With respect to regulation, allosterically activated by fructose 1,6-bisphosphate (FBP). Catalyzes the conversion of lactate to pyruvate. This is L-lactate dehydrogenase 2 from Enterococcus faecalis (strain ATCC 700802 / V583).